Here is a 637-residue protein sequence, read N- to C-terminus: Sodium-dependent phosphate transport protein 2A (637 aa).

The Cytoplasmic segment spans residues 1–103 (MMSYSERLGG…LAQVGTKLLK (103 aa)). Phosphoserine is present on residues Ser14 and Ser34. A helical membrane pass occupies residues 104-125 (VPLMLGFLYLFVCSLDVLSSAF). The Extracellular segment spans residues 126 to 145 (QLAGGKVAGDIFKDNAILSN). Residues 146-163 (PVAGLVVGILVTVLVQSS) traverse the membrane as a helical segment. The Cytoplasmic portion of the chain corresponds to 164-216 (STSTSIIVSMVSSGLLEVSSAIPIIMGSNIGTSVTNTIVALMQAGDRTDFRRA). Residues 217–236 (FAGATVHDCFNWLSVLVLLP) form a helical membrane-spanning segment. 2 cysteine pairs are disulfide-bonded: Cys225–Cys520 and Cys306–Cys334. Residues 237–345 (LEAATGYLHH…HIFVDTGLPD (109 aa)) lie on the Extracellular side of the membrane. Residues Asn298 and Asn328 are each glycosylated (N-linked (GlcNAc...) asparagine). The helical transmembrane segment at 346–368 (LAVGLILLAGSLVVLCTCLILLV) threads the bilayer. The Cytoplasmic portion of the chain corresponds to 369–410 (KMLNSLLKGQVANVIQKVINTDFPAPFTWVTGYFAMVVGASM). Residues 411–434 (TFVVQSSSVFTSAITPLIGLGVIS) traverse the membrane as a helical segment. At 435–464 (IERAYPLTLGSNIGTTTTAILAALASPREK) the chain is on the extracellular side. The chain crosses the membrane as a helical span at residues 465-485 (LSSSFQIALCHFFFNISGILL). The Cytoplasmic segment spans residues 486-511 (WYPLPCTRLPIRMAKALGKRTAKYRW). Position 506 is a phosphothreonine; by PKC (Thr506). Residues 512–532 (FAVLYLLVCFLLLPSLVFGIS) form a helical membrane-spanning segment. Residues 533-537 (MAGWQ) lie on the Extracellular side of the membrane. Residues 538 to 559 (AMVGVGTPFGALLAFVVLVNVL) form a helical membrane-spanning segment. Topologically, residues 560-637 (QSRSPGHLPK…LPAHHNATRL (78 aa)) are cytoplasmic. At Ser605 the chain carries Phosphoserine. A Phosphothreonine modification is found at Thr621. Ser623 carries the phosphoserine modification.

This sequence belongs to the SLC34A transporter family. As to quaternary structure, interacts via its C-terminal region with NHERF4. Interacts with NHERF1. Interacts with TMEM174; regulates SLC34A1 internalization by PTH and FGF23. Kidney.

It localises to the apical cell membrane. Its subcellular location is the cell membrane. It carries out the reaction 3 Na(+)(out) + phosphate(out) = 3 Na(+)(in) + phosphate(in). With respect to regulation, transport activity is significantly increased in response to dietary phosphate deprivation. In terms of biological role, involved in actively transporting phosphate into cells via Na(+) cotransport in the renal brush border membrane. The cotransport has a Na(+):Pi stoichiometry of 3:1 and is electrogenic. This is Sodium-dependent phosphate transport protein 2A from Rattus norvegicus (Rat).